A 367-amino-acid polypeptide reads, in one-letter code: 1-deoxy-D-xylulose 5-phosphate reductoisomerase (367 aa).

NADPH-binding residues include T10, G11, S12, I13, G34, K35, N36, and N112. Residue K113 participates in 1-deoxy-D-xylulose 5-phosphate binding. E114 contributes to the NADPH binding site. D138 provides a ligand contact to Mn(2+). Residues S139, E140, S164, and H186 each contribute to the 1-deoxy-D-xylulose 5-phosphate site. A Mn(2+)-binding site is contributed by E140. G192 is an NADPH binding site. S199, N204, K205, and E208 together coordinate 1-deoxy-D-xylulose 5-phosphate. E208 contacts Mn(2+).

This sequence belongs to the DXR family. Mg(2+) serves as cofactor. Requires Mn(2+) as cofactor.

The catalysed reaction is 2-C-methyl-D-erythritol 4-phosphate + NADP(+) = 1-deoxy-D-xylulose 5-phosphate + NADPH + H(+). It participates in isoprenoid biosynthesis; isopentenyl diphosphate biosynthesis via DXP pathway; isopentenyl diphosphate from 1-deoxy-D-xylulose 5-phosphate: step 1/6. In terms of biological role, catalyzes the NADPH-dependent rearrangement and reduction of 1-deoxy-D-xylulose-5-phosphate (DXP) to 2-C-methyl-D-erythritol 4-phosphate (MEP). This Thermus thermophilus (strain ATCC BAA-163 / DSM 7039 / HB27) protein is 1-deoxy-D-xylulose 5-phosphate reductoisomerase.